Here is a 966-residue protein sequence, read N- to C-terminus: Next to BRCA1 gene 1 protein (966 aa).

A PB1 domain is found at 4–85 (QVTLNVTFKN…NQLQMQVHEG (82 aa)). Serine 116 carries the post-translational modification Phosphoserine. A ZZ-type zinc finger spans residues 212-264 (SWHIACNNCQRRIVGVRYQCSLCPSYNICEDCEAGPYGHDTNHVLLKLRRPVV). Residues cysteine 217, cysteine 220, cysteine 231, cysteine 234, cysteine 240, cysteine 243, histidine 250, and histidine 254 each contribute to the Zn(2+) site. An ATG8 family protein-binding region spans residues 542–636 (ASERELYIPS…KRKAENIASV (95 aa)). A Phosphothreonine; by GSK3-alpha modification is found at threonine 586. 3 positions are modified to phosphoserine: serine 590, serine 596, and serine 625. Acidic residues predominate over residues 699 to 718 (EAVMEEEEDEEDEEEEDELK). Disordered regions lie at residues 699–728 (EAVMEEEEDEEDEEEEDELKDEVQSQSSAS), 750–792 (MYSS…QPQE), and 848–879 (VPDQIRGEPRGSSGLVNSRQKSYDHSRHHHGS). The interval 727-738 (ASSEDYIIILPE) is ATG8 family protein-binding. Positions 913–957 (SEDQTAALMAHLFEMGFCDRQLNLRLLKKHNYNILQVVTELLQLN) constitute a UBA domain.

As to quaternary structure, homooligomer and heterooligomer. Interacts with TRIM55. Interacts with titin/TTN. Interacts with RNF29, USP8, MAP1LC3A, MAP1LC3B, MAP1LC3C, GABARAP, GABARAPL1 and GABARAPL2. Binds to ubiquitin and ubiquitinated proteins. Interacts with SQSTM1. Interacts with TAX1BP1. Interacts with IRF3; this interaction mediates autophagic degradation of IRF3. Interacts with IL12A and IL12B. In terms of assembly, (Microbial infection) Interacts with Influenza A virus protein PB1; this interaction promotes NBR1-mediated selective autophagic degradation of MAVS. Post-translationally, (Microbial infection) Cleaved by S.pyogenes SpeB protease; leading to its degradation. Degradation by SpeB prevents autophagy, promoting to S.pyogenes intracellular replication. Phosphorylated by GSK3A; this phosphorylation inhibits NBR1 involvement in the formation of ubiquitinated protein aggregates.

It is found in the cytoplasm. The protein localises to the cytoplasmic vesicle. Its subcellular location is the autophagosome. It localises to the lysosome. The protein resides in the myofibril. It is found in the sarcomere. The protein localises to the m line. Ubiquitin-binding autophagy adapter that participates in different processes including host defense or intracellular homeostasis. Possesses a double function during the selective autophagy by acting as a shuttle bringing ubiquitinated proteins to autophagosomes and also by participating in the formation of protein aggregates. Plays a role in the regulation of the innate immune response by modulating type I interferon production and targeting ubiquitinated IRF3 for autophagic degradation. In response to oxidative stress, promotes an increase in SQSTM1 levels, phosphorylation, and body formation by preventing its autophagic degradation. In turn, activates the KEAP1-NRF2/NFE2L2 antioxidant pathway. Also plays non-autophagy role by mediating the shuttle of IL-12 to late endosome for subsequent secretion. The chain is Next to BRCA1 gene 1 protein (NBR1) from Homo sapiens (Human).